The sequence spans 327 residues: o-succinylbenzoate synthase (327 aa).

Lys-110 functions as the Proton donor in the catalytic mechanism. Positions 138, 165, and 188 each coordinate Mg(2+). The active-site Proton acceptor is Lys-212.

It belongs to the mandelate racemase/muconate lactonizing enzyme family. MenC type 1 subfamily. Requires a divalent metal cation as cofactor.

The enzyme catalyses (1R,6R)-6-hydroxy-2-succinyl-cyclohexa-2,4-diene-1-carboxylate = 2-succinylbenzoate + H2O. Its pathway is quinol/quinone metabolism; 1,4-dihydroxy-2-naphthoate biosynthesis; 1,4-dihydroxy-2-naphthoate from chorismate: step 4/7. It participates in quinol/quinone metabolism; menaquinone biosynthesis. Functionally, converts 2-succinyl-6-hydroxy-2,4-cyclohexadiene-1-carboxylate (SHCHC) to 2-succinylbenzoate (OSB). The protein is o-succinylbenzoate synthase of Mycobacterium ulcerans (strain Agy99).